Here is a 40-residue protein sequence, read N- to C-terminus: Chaperonin HSP60, mitochondrial (40 aa).

This sequence belongs to the chaperonin (HSP60) family.

Its subcellular location is the mitochondrion. Functionally, implicated in mitochondrial protein import and macromolecular assembly. May facilitate the correct folding of imported proteins. May also prevent misfolding and promote the refolding and proper assembly of unfolded polypeptides generated under stress conditions in the mitochondrial matrix. The sequence is that of Chaperonin HSP60, mitochondrial from Solanum tuberosum (Potato).